The primary structure comprises 487 residues: 3-octaprenyl-4-hydroxybenzoate carboxy-lyase (487 aa).

Position 172 (asparagine 172) interacts with Mn(2+). Prenylated FMN is bound by residues isoleucine 175–arginine 177, arginine 189–leucine 191, and arginine 194–glycine 195. Glutamate 238 is a Mn(2+) binding site. Catalysis depends on aspartate 287, which acts as the Proton donor.

The protein belongs to the UbiD family. As to quaternary structure, homohexamer. Prenylated FMN serves as cofactor. Mn(2+) is required as a cofactor.

It localises to the cell membrane. It carries out the reaction a 4-hydroxy-3-(all-trans-polyprenyl)benzoate + H(+) = a 2-(all-trans-polyprenyl)phenol + CO2. It functions in the pathway cofactor biosynthesis; ubiquinone biosynthesis. In terms of biological role, catalyzes the decarboxylation of 3-octaprenyl-4-hydroxy benzoate to 2-octaprenylphenol, an intermediate step in ubiquinone biosynthesis. This chain is 3-octaprenyl-4-hydroxybenzoate carboxy-lyase, found in Actinobacillus pleuropneumoniae serotype 3 (strain JL03).